The sequence spans 359 residues: S-adenosylmethionine-dependent nucleotide dehydratase RSAD2 (359 aa).

The tract at residues 43-67 is disordered; sequence QTPARKISRPESRTSKQKEGSRAPF. Basic and acidic residues predominate over residues 50–63; sequence SRPESRTSKQKEGS. In terms of domain architecture, Radical SAM core spans 67-287; that stretch reads FTTPSSVNYH…LERHQSIQCL (221 aa). Positions 81, 85, and 88 each coordinate [4Fe-4S] cluster.

It belongs to the radical SAM superfamily. RSAD2 family. The cofactor is [4Fe-4S] cluster.

It is found in the endoplasmic reticulum membrane. Its function is as follows. Interferon-inducible iron-sulfur (4FE-4S) cluster-binding antiviral protein which plays a major role in the cell antiviral state induced by type I and type II interferon. The chain is S-adenosylmethionine-dependent nucleotide dehydratase RSAD2 from Danio rerio (Zebrafish).